We begin with the raw amino-acid sequence, 343 residues long: S-adenosylmethionine:tRNA ribosyltransferase-isomerase (343 aa).

It belongs to the QueA family. In terms of assembly, monomer.

The protein localises to the cytoplasm. It catalyses the reaction 7-aminomethyl-7-carbaguanosine(34) in tRNA + S-adenosyl-L-methionine = epoxyqueuosine(34) in tRNA + adenine + L-methionine + 2 H(+). Its pathway is tRNA modification; tRNA-queuosine biosynthesis. In terms of biological role, transfers and isomerizes the ribose moiety from AdoMet to the 7-aminomethyl group of 7-deazaguanine (preQ1-tRNA) to give epoxyqueuosine (oQ-tRNA). The chain is S-adenosylmethionine:tRNA ribosyltransferase-isomerase from Syntrophotalea carbinolica (strain DSM 2380 / NBRC 103641 / GraBd1) (Pelobacter carbinolicus).